Here is a 476-residue protein sequence, read N- to C-terminus: Zinc finger CCCH domain-containing protein 6 (476 aa).

The span at 1–10 shows a compositional bias: low complexity; that stretch reads MEQPHAAAAA. Residues 1–57 form a disordered region; it reads MEQPHAAAAAAGGGEGEGGASPDTGLEGPMWRMGLGGGGGGGGGGGGGDGDAAGRLP. Positions 34 to 51 are enriched in gly residues; the sequence is GLGGGGGGGGGGGGGDGD. 3 C3H1-type zinc fingers span residues 59 to 87, 108 to 136, and 153 to 181; these read RPGE…HPRD, RAGQ…HPKQ, and RLGE…HPEF. The span at 290–301 shows a compositional bias: polar residues; sequence SSTGQSSNNQQE. The disordered stretch occupies residues 290 to 309; it reads SSTGQSSNNQQEHGFPERPG. 2 C3H1-type zinc fingers span residues 307 to 335 and 353 to 381; these read RPGQ…HPRE and RPGA…HPMG. A disordered region spans residues 456–476; the sequence is TMMRAQTNTTSGGSSSPGGGR.

The protein localises to the nucleus. This chain is Zinc finger CCCH domain-containing protein 6, found in Oryza sativa subsp. japonica (Rice).